Consider the following 642-residue polypeptide: Eukaryotic translation initiation factor 2A (642 aa).

4 WD repeats span residues 69-115 (MKLS…KKDC), 186-224 (TYLI…ITKK), 289-331 (LTTG…HSLP), and 374-419 (FDAT…VFVK). A disordered region spans residues 485-593 (ISQHPSREAS…KETSPEEKKI (109 aa)). Composition is skewed to low complexity over residues 493–507 (ASSN…AGGA) and 563–583 (TSPD…PTNN). A phosphoserine mark is found at Ser-564, Ser-567, and Ser-572.

Belongs to the WD repeat EIF2A family. Post-translationally, ubiquitinated, probably leading to its degradation. May explain why it has a short half-life of 17 minutes.

In terms of biological role, functions in the early steps of protein synthesis of a small number of specific mRNAs. Acts by directing the binding of methionyl-tRNAi to 40S ribosomal subunits. In contrast to the eIF-2 complex, it binds methionyl-tRNAi to 40S subunits in a codon-dependent manner, whereas the eIF-2 complex binds methionyl-tRNAi to 40S subunits in a GTP-dependent manner. Specifically associates with both 40S subunits and 80S ribosomes. This Saccharomyces cerevisiae (strain ATCC 204508 / S288c) (Baker's yeast) protein is Eukaryotic translation initiation factor 2A.